Here is a 670-residue protein sequence, read N- to C-terminus: Tyramine beta-hydroxylase (670 aa).

Over residues 26–35 (HHQLAYHHHK) the composition is skewed to basic residues. Residues 26 to 63 (HHQLAYHHHKQEQQQQQQQQQQQQAKQKQKQNGVQQGR) are disordered. The segment covering 38-61 (QQQQQQQQQQQQAKQKQKQNGVQQ) has biased composition (low complexity). The chain crosses the membrane as a helical span at residues 65-81 (PTFMPVMLLLLMATLLT). The DOMON domain occupies 104–220 (KEIKLSWMVD…GTMYVVWARG (117 aa)). A glycan (N-linked (GlcNAc...) asparagine) is linked at Asn235. Tyr281 is a catalytic residue. 2 disulfides stabilise this stretch: Cys283–Cys334 and Cys319–Cys344. Residues His312 and His313 each contribute to the Cu(2+) site. 4 residues coordinate Cu(2+): His382, His461, His463, and Met536. Intrachain disulfides connect Cys439/Cys552, Cys443/Cys613, and Cys515/Cys537. His461 is an active-site residue. Asn614 is a glycosylation site (N-linked (GlcNAc...) asparagine).

This sequence belongs to the copper type II ascorbate-dependent monooxygenase family. In terms of assembly, is most likely a monomer under physiological conditions, although under conditions of high pH and low ionic strength the dimeric form predominates. Both forms are equally active. Cu(2+) is required as a cofactor. In terms of tissue distribution, present in head and in neurons innervating the oviduct (at protein level).

Its subcellular location is the membrane. It catalyses the reaction tyramine + L-ascorbate + O2 = (R)-octopamine + L-dehydroascorbate + H2O. Its function is as follows. Catalyzes the hydroxylation of tyramine into octopamine, a neurotransmitter involved in ovulation and locomotion. Functions in an amine-mediated Bacc-dependent signaling pathway that negatively regulates acute ethanol sensitivity. Involved in facilitation of nociceptive escape behavior in response to potentially damaging stimuli, such as high temperatures. The chain is Tyramine beta-hydroxylase (Tbh) from Drosophila melanogaster (Fruit fly).